We begin with the raw amino-acid sequence, 733 residues long: Arginine decarboxylase 1A, chloroplastic (733 aa).

The N-terminal 44 residues, 1 to 44 (MPALGCCVDAAVSPPPGYSFLWDSSLPAPEIFPSGVPPSTNTAV), are a transit peptide targeting the chloroplast. At Lys-157 the chain carries N6-(pyridoxal phosphate)lysine. Pyridoxal 5'-phosphate contacts are provided by residues Ser-309, Gly-346, and 395-398 (ESGR). A substrate-binding site is contributed by 460–461 (YA). The active-site Proton donor; shared with dimeric partner is Cys-548. Residue Asp-549 participates in substrate binding. Tyr-592 is a pyridoxal 5'-phosphate binding site.

The protein belongs to the Orn/Lys/Arg decarboxylase class-II family. SpeA subfamily. In terms of assembly, interacts, via its C-terminal internal region, with the tobacco mosaic virus (TMV) replicase helicase region. It depends on Mg(2+) as a cofactor. Requires pyridoxal 5'-phosphate as cofactor.

The protein localises to the plastid. It is found in the chloroplast. The enzyme catalyses L-arginine + H(+) = agmatine + CO2. It functions in the pathway alkaloid biosynthesis; nicotine biosynthesis. It participates in amine and polyamine biosynthesis; agmatine biosynthesis; agmatine from L-arginine: step 1/1. Functionally, involved in the biosynthesis of pyridine alkaloid natural products, leading mainly to the production of anabasine, anatabine, nicotine and nornicotine, effective deterrents against herbivores with antiparasitic and pesticide properties (neurotoxins); nornicotine serves as the precursor in the synthesis of the carcinogen compound N'-nitrosonornicotine (NNN). Required for the biosynthesis of putrescine. Catalyzes the first step of polyamine (PA) biosynthesis to produce putrescine from arginine. In Nicotiana tabacum (Common tobacco), this protein is Arginine decarboxylase 1A, chloroplastic.